Reading from the N-terminus, the 322-residue chain is DNA repair and recombination protein RadA (322 aa).

Position 105–112 (105–112 (GMYGSGKT)) interacts with ATP.

This sequence belongs to the eukaryotic RecA-like protein family.

Functionally, involved in DNA repair and in homologous recombination. Binds and assemble on single-stranded DNA to form a nucleoprotein filament. Hydrolyzes ATP in a ssDNA-dependent manner and promotes DNA strand exchange between homologous DNA molecules. The protein is DNA repair and recombination protein RadA of Methanococcus maripaludis (strain C6 / ATCC BAA-1332).